We begin with the raw amino-acid sequence, 88 residues long: Large ribosomal subunit protein bL27 (88 aa).

The tract at residues 1-21 (MAHKKGTGSTRNGRDSNAKRL) is disordered.

The protein belongs to the bacterial ribosomal protein bL27 family.

This Parasynechococcus marenigrum (strain WH8102) protein is Large ribosomal subunit protein bL27.